The sequence spans 441 residues: Cysteine desulfurase, mitosomal (441 aa).

Pyridoxal 5'-phosphate contacts are provided by residues Ala-107–Thr-108, Asn-189, Gln-217, and Ser-237–His-239. An N6-(pyridoxal phosphate)lysine modification is found at Lys-240. Position 277 (Thr-277) interacts with pyridoxal 5'-phosphate. Cys-367 serves as the catalytic Cysteine persulfide intermediate. Cys-367 is a [2Fe-2S] cluster binding site.

This sequence belongs to the class-V pyridoxal-phosphate-dependent aminotransferase family. NifS/IscS subfamily. In terms of assembly, interacts with ISD11. Pyridoxal 5'-phosphate serves as cofactor.

It localises to the mitosome. It carries out the reaction (sulfur carrier)-H + L-cysteine = (sulfur carrier)-SH + L-alanine. Catalyzes the removal of elemental sulfur from cysteine to produce alanine. It supplies the inorganic sulfur for iron-sulfur (Fe-S) clusters in mitosomes. This is Cysteine desulfurase, mitosomal from Trachipleistophora hominis (Microsporidian parasite).